Consider the following 351-residue polypeptide: Quinolinate phosphoribosyltransferase [decarboxylating] 2b, mitochondrial (351 aa).

Residues Arg142, 173–175 (TRK), Arg197, Lys207, Glu240, Asp267, 299–301 (SGN), and 320–322 (SGA) contribute to the substrate site.

This sequence belongs to the NadC/ModD family. Expressed in roots and flowers.

The protein localises to the mitochondrion. The catalysed reaction is nicotinate beta-D-ribonucleotide + CO2 + diphosphate = quinolinate + 5-phospho-alpha-D-ribose 1-diphosphate + 2 H(+). It participates in alkaloid biosynthesis; nicotine biosynthesis. It functions in the pathway cofactor biosynthesis; NAD(+) biosynthesis; nicotinate D-ribonucleotide from quinolinate: step 1/1. Functionally, involved in the biosynthesis of pyridine alkaloid natural products, leading mainly to the production of anabasine, anatabine, nicotine and nornicotine, effective deterrents against herbivores with antiparasitic and pesticide properties (neurotoxins); nornicotine serves as the precursor in the synthesis of the carcinogen compound N'-nitrosonornicotine (NNN). Involved in the catabolism of quinolinic acid (QA). The chain is Quinolinate phosphoribosyltransferase [decarboxylating] 2b, mitochondrial from Nicotiana tabacum (Common tobacco).